A 292-amino-acid chain; its full sequence is MASSMRSLFSDHGRYFEAFRRFLNNSTEYQCMREFMDKQLPGIIARIGGSKSEIKVLSIGGGAGEMDLHILSKVKAQYPGVHIINEVVEPSAEQITKYKELVAKTSNLENIKFAWHKETSSEYQNRVMEQKEIQKWDFIHMIQMLYYVDDIPATLKFFHSLLATNAKILIILVSGKSGWLKFWKKYRSRLPQNDLCQYVTSFDIIQMLDSLGIKYQCYDLLSTMDITDCFIDGNENGELLWDFLTETCNFLTTAPPDLRAEIMKDLQGPEFIVRKEGKILFDNSLSFITIEA.

Glutamate 28 contributes to the substrate binding site. Residues glycine 60, glutamate 89, glutamine 94, serine 120, and isoleucine 142 each coordinate S-adenosyl-L-methionine. Position 283 (asparagine 283) interacts with substrate.

The protein belongs to the class I-like SAM-binding methyltransferase superfamily. HNMT family. In terms of assembly, monomer. As to expression, expressed in jejunum, brain &gt; lung, spleen, stomach &gt; liver, kidney.

Its subcellular location is the cytoplasm. It carries out the reaction histamine + S-adenosyl-L-methionine = N(tau)-methylhistamine + S-adenosyl-L-homocysteine + H(+). Its function is as follows. Inactivates histamine by N-methylation. Plays an important role in degrading histamine and in regulating the airway response to histamine. The polypeptide is Histamine N-methyltransferase (HNMT) (Cavia porcellus (Guinea pig)).